The following is a 365-amino-acid chain: 2-aminoethylphosphonate--pyruvate transaminase (365 aa).

Lysine 194 is subject to N6-(pyridoxal phosphate)lysine.

The protein belongs to the class-V pyridoxal-phosphate-dependent aminotransferase family. PhnW subfamily. In terms of assembly, homodimer. The cofactor is pyridoxal 5'-phosphate.

The catalysed reaction is (2-aminoethyl)phosphonate + pyruvate = phosphonoacetaldehyde + L-alanine. In terms of biological role, involved in phosphonate degradation. The protein is 2-aminoethylphosphonate--pyruvate transaminase of Bacillus cereus (strain AH187).